The following is a 357-amino-acid chain: Velvet complex subunit 2 (357 aa).

The region spanning 32–341 (RRAERKYKLE…AQQGIKIPIR (310 aa)) is the Velvet domain.

The protein belongs to the velvet family. VelB subfamily. In terms of assembly, component of the heterotrimeric velvet complex composed of LAE1, VEL1 and VEL2; VEL1A acting as a bridging protein between LAE1 and VEL2. Forms a heterodimeric complex with VOS1; the formation of the VEL2-VOS1 complex is light-dependent.

The protein resides in the nucleus. It is found in the cytoplasm. Its function is as follows. Component of the velvet transcription factor complex that controls sexual/asexual developmental ratio in response to light, promoting sexual development in the darkness while stimulating asexual sporulation under illumination. The velvet complex acts as a global regulator for secondary metabolite gene expression. Component of the VEL2-VOS1 heterodimeric complex that plays a dual role in activating genes associated with spore maturation and repressing certain development-associated genes. The complex binds DNA through the DNA-binding domain of VOS1 that recognizes an 11-nucleotide consensus sequence 5'-CTGGCCGCGGC-3' consisting of two motifs in the promoters of key developmental regulatory genes. The VEL2-VOS1 complex is required for normal pseudothecium development and regulates asexual spore compartmentalization, pigmentation and germination. The sequence is that of Velvet complex subunit 2 from Cochliobolus heterostrophus (strain C5 / ATCC 48332 / race O) (Southern corn leaf blight fungus).